A 418-amino-acid chain; its full sequence is Transcription termination factor Rho (418 aa).

The Rho RNA-BD domain occupies 48–123 (SIFGEGTLEV…VKVDKVNGEA (76 aa)). ATP-binding positions include 169 to 174 (GKGQRA), 181 to 186 (KSGKTV), and R212.

The protein belongs to the Rho family. In terms of assembly, homohexamer. The homohexamer assembles into an open ring structure.

Its function is as follows. Facilitates transcription termination by a mechanism that involves Rho binding to the nascent RNA, activation of Rho's RNA-dependent ATPase activity, and release of the mRNA from the DNA template. This chain is Transcription termination factor Rho, found in Chromobacterium violaceum (strain ATCC 12472 / DSM 30191 / JCM 1249 / CCUG 213 / NBRC 12614 / NCIMB 9131 / NCTC 9757 / MK).